We begin with the raw amino-acid sequence, 248 residues long: 5'-nucleotidase SurE (248 aa).

The a divalent metal cation site is built by Asp8, Asp9, Ser39, and Asn91.

Belongs to the SurE nucleotidase family. Requires a divalent metal cation as cofactor.

The protein resides in the cytoplasm. It carries out the reaction a ribonucleoside 5'-phosphate + H2O = a ribonucleoside + phosphate. In terms of biological role, nucleotidase that shows phosphatase activity on nucleoside 5'-monophosphates. This Marinomonas sp. (strain MWYL1) protein is 5'-nucleotidase SurE.